The following is a 128-amino-acid chain: UPF0325 protein YaeH (128 aa).

The protein belongs to the UPF0325 family.

In Escherichia fergusonii (strain ATCC 35469 / DSM 13698 / CCUG 18766 / IAM 14443 / JCM 21226 / LMG 7866 / NBRC 102419 / NCTC 12128 / CDC 0568-73), this protein is UPF0325 protein YaeH.